Here is a 143-residue protein sequence, read N- to C-terminus: uncharacterized protein (143 aa).

Positions 111-143 (VTQDISHTSGKSPTPKAKSSSPKKSKKKNWIPL) are disordered. Residues 119-130 (SGKSPTPKAKSS) are compositionally biased toward low complexity. Residues 131-143 (SPKKSKKKNWIPL) are compositionally biased toward basic residues.

It belongs to the chlamydial CPn_0742/CT_635/TC_0003 family.

This is an uncharacterized protein from Chlamydia muridarum (strain MoPn / Nigg).